Here is a 342-residue protein sequence, read N- to C-terminus: S-adenosylmethionine:tRNA ribosyltransferase-isomerase (342 aa).

The protein belongs to the QueA family. As to quaternary structure, monomer.

It localises to the cytoplasm. It carries out the reaction 7-aminomethyl-7-carbaguanosine(34) in tRNA + S-adenosyl-L-methionine = epoxyqueuosine(34) in tRNA + adenine + L-methionine + 2 H(+). The protein operates within tRNA modification; tRNA-queuosine biosynthesis. Its function is as follows. Transfers and isomerizes the ribose moiety from AdoMet to the 7-aminomethyl group of 7-deazaguanine (preQ1-tRNA) to give epoxyqueuosine (oQ-tRNA). This Listeria welshimeri serovar 6b (strain ATCC 35897 / DSM 20650 / CCUG 15529 / CIP 8149 / NCTC 11857 / SLCC 5334 / V8) protein is S-adenosylmethionine:tRNA ribosyltransferase-isomerase.